We begin with the raw amino-acid sequence, 316 residues long: Ribosomal RNA small subunit methyltransferase H (316 aa).

S-adenosyl-L-methionine-binding positions include glycine 37–histidine 39, aspartate 56, phenylalanine 83, aspartate 106, and histidine 113. Positions proline 276–glutamate 316 are disordered. Basic and acidic residues predominate over residues lysine 302–glutamate 316.

This sequence belongs to the methyltransferase superfamily. RsmH family.

The protein localises to the cytoplasm. It carries out the reaction cytidine(1402) in 16S rRNA + S-adenosyl-L-methionine = N(4)-methylcytidine(1402) in 16S rRNA + S-adenosyl-L-homocysteine + H(+). Specifically methylates the N4 position of cytidine in position 1402 (C1402) of 16S rRNA. This is Ribosomal RNA small subunit methyltransferase H from Leptospira borgpetersenii serovar Hardjo-bovis (strain JB197).